A 495-amino-acid polypeptide reads, in one-letter code: tRNA-guanine(15) transglycosylase (495 aa).

Residue D83 is the Nucleophile of the active site. A substrate-binding site is contributed by D118. C273 and C278 together coordinate Zn(2+).

This sequence belongs to the archaeosine tRNA-ribosyltransferase family. Requires Zn(2+) as cofactor.

The catalysed reaction is guanosine(15) in tRNA + 7-cyano-7-deazaguanine = 7-cyano-7-carbaguanosine(15) in tRNA + guanine. The protein operates within tRNA modification; archaeosine-tRNA biosynthesis. In terms of biological role, exchanges the guanine residue with 7-cyano-7-deazaguanine (preQ0) at position 15 in the dihydrouridine loop (D-loop) of archaeal tRNAs. This is tRNA-guanine(15) transglycosylase from Pyrobaculum aerophilum (strain ATCC 51768 / DSM 7523 / JCM 9630 / CIP 104966 / NBRC 100827 / IM2).